The chain runs to 290 residues: 4-hydroxy-tetrahydrodipicolinate synthase (290 aa).

Thr46 is a pyruvate binding site. Catalysis depends on Tyr134, which acts as the Proton donor/acceptor. Catalysis depends on Lys163, which acts as the Schiff-base intermediate with substrate. Val205 contributes to the pyruvate binding site.

Belongs to the DapA family. As to quaternary structure, homotetramer; dimer of dimers.

The protein localises to the cytoplasm. The catalysed reaction is L-aspartate 4-semialdehyde + pyruvate = (2S,4S)-4-hydroxy-2,3,4,5-tetrahydrodipicolinate + H2O + H(+). It functions in the pathway amino-acid biosynthesis; L-lysine biosynthesis via DAP pathway; (S)-tetrahydrodipicolinate from L-aspartate: step 3/4. Functionally, catalyzes the condensation of (S)-aspartate-beta-semialdehyde [(S)-ASA] and pyruvate to 4-hydroxy-tetrahydrodipicolinate (HTPA). The protein is 4-hydroxy-tetrahydrodipicolinate synthase of Bacillus subtilis (strain 168).